We begin with the raw amino-acid sequence, 607 residues long: Zinc finger protein 750 (607 aa).

Residues 25–51 (YQCFQCPFTCNIKSHLFNHMKYNLCKN) form a CCHC-type zinc finger. 4 residues coordinate Zn(2+): Cys-27, Cys-30, His-43, and Cys-49. Positions 60 to 78 (MEQTGKASRASQHSPAFSH) are enriched in polar residues. Disordered stretches follow at residues 60 to 133 (MEQT…DKSE), 318 to 467 (RAVQ…SSQE), 482 to 511 (QALPNTSETPEKETISNAEVSTTESPQDLE), and 575 to 607 (GQKRANNRPLRHTNKRAKVKEPSRPRRKRSQNC). Composition is skewed to basic and acidic residues over residues 79 to 133 (NSKE…DKSE) and 318 to 334 (RAVQEHNTGDKGIRESP). The segment covering 369–380 (HSGSQSHIISGS) has biased composition (low complexity). The segment covering 421-432 (DKEEDEETEEEI) has biased composition (acidic residues). The span at 452 to 462 (HYPDRELHYDS) shows a compositional bias: basic and acidic residues. Over residues 496–507 (ISNAEVSTTESP) the composition is skewed to polar residues. Over residues 579–592 (ANNRPLRHTNKRAK) the composition is skewed to basic residues.

Its subcellular location is the nucleus. Functionally, transcription factor involved in epidermis differentiation. The protein is Zinc finger protein 750 (znf750) of Danio rerio (Zebrafish).